The following is a 75-amino-acid chain: Small ribosomal subunit protein bS18 (75 aa).

The protein belongs to the bacterial ribosomal protein bS18 family. As to quaternary structure, part of the 30S ribosomal subunit. Forms a tight heterodimer with protein bS6.

Binds as a heterodimer with protein bS6 to the central domain of the 16S rRNA, where it helps stabilize the platform of the 30S subunit. In Cereibacter sphaeroides (strain KD131 / KCTC 12085) (Rhodobacter sphaeroides), this protein is Small ribosomal subunit protein bS18.